The sequence spans 449 residues: Trigger factor (449 aa).

The region spanning 174-261 is the PPIase FKBP-type domain; that stretch reads GDIAVVGFKG…LKDLKTRELP (88 aa). The interval 430–449 is disordered; the sequence is ENSTVTEKAPDKDKPSVTDA. The segment covering 437 to 449 has biased composition (basic and acidic residues); that stretch reads KAPDKDKPSVTDA.

Belongs to the FKBP-type PPIase family. Tig subfamily.

The protein resides in the cytoplasm. The catalysed reaction is [protein]-peptidylproline (omega=180) = [protein]-peptidylproline (omega=0). Its function is as follows. Involved in protein export. Acts as a chaperone by maintaining the newly synthesized protein in an open conformation. Functions as a peptidyl-prolyl cis-trans isomerase. This is Trigger factor from Synechococcus sp. (strain CC9311).